The sequence spans 374 residues: Aclacinomycin 10-hydroxylase RdmB (374 aa).

Positions 171, 190, 213, 240, 241, and 255 each coordinate S-adenosyl-L-methionine.

It belongs to the class I-like SAM-binding methyltransferase superfamily. Cation-independent O-methyltransferase family. Homodimer. Homotetramer in solution. Tetramers might not be very stable in solution.

It carries out the reaction 15-demethylaclacinomycin T + AH2 + O2 = 10-decarboxymethylaclacinomycin T + A + CO2 + H2O. The enzyme catalyses 10-carboxy-13-deoxycarminomycin + AH2 + O2 + H(+) = 10-hydroxy-13-deoxycarminomycin + A + CO2 + H2O. The catalysed reaction is 10-hydroxy-13-deoxycarminomycin + S-adenosyl-L-methionine = 10-hydroxy-13-deoxydaunorubicin + S-adenosyl-L-homocysteine + H(+). The protein operates within antibiotic biosynthesis; rhodomycin biosynthesis. Its pathway is antibiotic biosynthesis; aclacinomycin biosynthesis. Its activity is regulated as follows. The hydroxylation reaction requires S-adenosyl-L-methionine (SAM) as a cofactor. S-adenosine-L-homocysteine and sinefungin (a SAM analog) can also support the decarboxylative hydroxylation activity with 10-carboxy-13-deoxycarminomycin as substrate. SAM and its analogs are considered an essential structural ligand to maintain ternary structural integrity and the proper binding mode and orientation of electron-rich substrates during decarboxylative hydroxylation of C-10 by RdmB. In terms of biological role, involved in the biosynthesis of anthracyclines, an important group of aromatic polyketide antibiotics used in cancer chemotherapy. Acts as a 10-hydroxylase to catalyze a decarboxylative hydroxylation reaction on anthracyclines. During biosynthesis of rhodomycin, it catalyzes the removal of the carboxylic group at the C-10 position of 15-demethoxy-epsilon-rhodomycin coupled to hydroxylation at the same C-10 position to yield beta-rhodomycin. In vitro, can also catalyze the removal of the carboxylic group at the C-10 position of 15-demethoxyaclacinomycin T coupled to hydroxylation at the same C-10 position to yield 10-decarboxymethylaclacinomycin T. It can also use 10-carboxy-13-deoxycarminomycin, an analog of 15-demethoxy-epsilon-rhodomycin, to yield 10-hydroxy-13-deoxycarminomycin. In addition to its hydroxylation activity, it can act in vitro as a S-adenosyl-L-methionine-dependent O-methyltransferase and catalyze the 4-O-methylation of 10-hydroxy-13-deoxycarminomycin to 10-hydroxy-13-deoxydaunorubicin. The triglycosyl group of anthracyclines prevents the methylation reaction. The polypeptide is Aclacinomycin 10-hydroxylase RdmB (Streptomyces purpurascens).